The sequence spans 276 residues: Sulfur carrier protein FdhD (276 aa).

C120 serves as the catalytic Cysteine persulfide intermediate.

The protein belongs to the FdhD family.

Its subcellular location is the cytoplasm. Required for formate dehydrogenase (FDH) activity. Acts as a sulfur carrier protein that transfers sulfur from IscS to the molybdenum cofactor prior to its insertion into FDH. The protein is Sulfur carrier protein FdhD of Bordetella parapertussis (strain 12822 / ATCC BAA-587 / NCTC 13253).